The following is a 153-amino-acid chain: 3-hydroxyacyl-[acyl-carrier-protein] dehydratase FabZ (153 aa).

The active site involves H54.

This sequence belongs to the thioester dehydratase family. FabZ subfamily.

Its subcellular location is the cytoplasm. The enzyme catalyses a (3R)-hydroxyacyl-[ACP] = a (2E)-enoyl-[ACP] + H2O. Involved in unsaturated fatty acids biosynthesis. Catalyzes the dehydration of short chain beta-hydroxyacyl-ACPs and long chain saturated and unsaturated beta-hydroxyacyl-ACPs. This Shewanella amazonensis (strain ATCC BAA-1098 / SB2B) protein is 3-hydroxyacyl-[acyl-carrier-protein] dehydratase FabZ.